A 129-amino-acid chain; its full sequence is Small ribosomal subunit protein uS11 (129 aa).

The protein belongs to the universal ribosomal protein uS11 family. Part of the 30S ribosomal subunit. Interacts with proteins S7 and S18. Binds to IF-3.

In terms of biological role, located on the platform of the 30S subunit, it bridges several disparate RNA helices of the 16S rRNA. Forms part of the Shine-Dalgarno cleft in the 70S ribosome. The protein is Small ribosomal subunit protein uS11 of Phenylobacterium zucineum (strain HLK1).